The following is a 451-amino-acid chain: Glutamyl-tRNA reductase (451 aa).

Residues 49–52 (TCNR), S109, 114–116 (EQQ), and Q120 contribute to the substrate site. C50 (nucleophile) is an active-site residue. 190 to 195 (GAGAMG) contacts NADP(+).

This sequence belongs to the glutamyl-tRNA reductase family. Homodimer.

It carries out the reaction (S)-4-amino-5-oxopentanoate + tRNA(Glu) + NADP(+) = L-glutamyl-tRNA(Glu) + NADPH + H(+). The protein operates within porphyrin-containing compound metabolism; protoporphyrin-IX biosynthesis; 5-aminolevulinate from L-glutamyl-tRNA(Glu): step 1/2. Functionally, catalyzes the NADPH-dependent reduction of glutamyl-tRNA(Glu) to glutamate 1-semialdehyde (GSA). The polypeptide is Glutamyl-tRNA reductase (Mycolicibacterium smegmatis (strain ATCC 700084 / mc(2)155) (Mycobacterium smegmatis)).